The chain runs to 190 residues: MLYLASRSPRRHELLQRLDVPFQTLELDVPEVRAPGESPEHYVHRVALDKARAGLALVQADDAQAIVLGSDTEVVLGERVFGKPVDVDDAIAMLTVLAGRTHQVLTAVVLVGAQRPPLQALVVSEVTFDALDATRIAAYAASGEPMGKAGAYAIQGRAERFITHLSGSYSGVMGLPLFQTSQLLTAFGAH.

Asp-71 serves as the catalytic Proton acceptor.

Belongs to the Maf family. YhdE subfamily. A divalent metal cation is required as a cofactor.

The protein resides in the cytoplasm. The enzyme catalyses dTTP + H2O = dTMP + diphosphate + H(+). The catalysed reaction is UTP + H2O = UMP + diphosphate + H(+). Functionally, nucleoside triphosphate pyrophosphatase that hydrolyzes dTTP and UTP. May have a dual role in cell division arrest and in preventing the incorporation of modified nucleotides into cellular nucleic acids. The protein is dTTP/UTP pyrophosphatase of Xanthomonas campestris pv. campestris (strain ATCC 33913 / DSM 3586 / NCPPB 528 / LMG 568 / P 25).